The sequence spans 246 residues: Uridylate kinase (246 aa).

Residue 18–21 (KVSG) coordinates ATP. Residue Gly60 coordinates UMP. Residues Gly61 and Arg65 each coordinate ATP. Residues Asp80 and 141-148 (TGNPFFTT) contribute to the UMP site. ATP-binding residues include Thr168, Gln169, Tyr174, and Asp177.

The protein belongs to the UMP kinase family. As to quaternary structure, homohexamer.

The protein localises to the cytoplasm. It catalyses the reaction UMP + ATP = UDP + ADP. The protein operates within pyrimidine metabolism; CTP biosynthesis via de novo pathway; UDP from UMP (UMPK route): step 1/1. Its activity is regulated as follows. Inhibited by UTP. Catalyzes the reversible phosphorylation of UMP to UDP. The chain is Uridylate kinase from Granulibacter bethesdensis (strain ATCC BAA-1260 / CGDNIH1).